Here is a 957-residue protein sequence, read N- to C-terminus: SH3 domain-binding protein 4 (957 aa).

Residues 54–113 (DNVKEVVAIKDYCPNNFTTLKFSKGEHLYVLDTSGGEWWYAHNTTEMGYIPSSYVQPLNY) form the SH3 1 domain. The ZU5 domain occupies 312–449 (TSIVCRLDSS…LEPVMYVVMV (138 aa)). The SH3 2 domain occupies 649–719 (TSLKYGKLLK…HAKNVLVVGK (71 aa)).

As to quaternary structure, homodimer or homooligomer.

Its subcellular location is the membrane. The protein localises to the clathrin-coated pit. The protein resides in the cytoplasmic vesicle. It is found in the clathrin-coated vesicle. It localises to the nucleus. Possible role in regulating endocytosis of the transferrin receptor at the plasma membrane. Alternatively, may function as a negative regulator of the amino acid-induced TOR signaling by inhibiting the formation of active Rag GTPase complexes. Preferentially binds inactive Rag GTPase complexes and prevents their interaction with the mTORC1 complex inhibiting its relocalization to lysosomes and its activation. Thereby, may indirectly regulate cell growth, proliferation and autophagy. In Xenopus tropicalis (Western clawed frog), this protein is SH3 domain-binding protein 4 (sh3bp4).